The primary structure comprises 529 residues: Retinoic acid-induced protein 2 (529 aa).

Disordered regions lie at residues 1-21 (MDDLQSQNLSMDMTDSPPTLA) and 400-419 (SHSSNSNGTEMVSQPSHPGS). Residues 407 to 416 (GTEMVSQPSH) show a composition bias toward polar residues.

The protein is Retinoic acid-induced protein 2 (Rai2) of Mus musculus (Mouse).